The sequence spans 362 residues: S-adenosylmethionine:tRNA ribosyltransferase-isomerase (362 aa).

This sequence belongs to the QueA family. In terms of assembly, monomer.

It is found in the cytoplasm. It catalyses the reaction 7-aminomethyl-7-carbaguanosine(34) in tRNA + S-adenosyl-L-methionine = epoxyqueuosine(34) in tRNA + adenine + L-methionine + 2 H(+). Its pathway is tRNA modification; tRNA-queuosine biosynthesis. Functionally, transfers and isomerizes the ribose moiety from AdoMet to the 7-aminomethyl group of 7-deazaguanine (preQ1-tRNA) to give epoxyqueuosine (oQ-tRNA). The chain is S-adenosylmethionine:tRNA ribosyltransferase-isomerase from Syntrophus aciditrophicus (strain SB).